Reading from the N-terminus, the 235-residue chain is Thiamine import ATP-binding protein ThiQ (235 aa).

The ABC transporter domain maps to Leu2–Ile230. Gly32 to Ser39 is an ATP binding site.

The protein belongs to the ABC transporter superfamily. Thiamine importer (TC 3.A.1.19.1) family. As to quaternary structure, the complex is composed of two ATP-binding proteins (ThiQ), two transmembrane proteins (ThiP) and a solute-binding protein (ThiB).

It is found in the cell inner membrane. The catalysed reaction is thiamine(out) + ATP + H2O = thiamine(in) + ADP + phosphate + H(+). Its function is as follows. Part of the ABC transporter complex ThiBPQ involved in thiamine import. Responsible for energy coupling to the transport system. The sequence is that of Thiamine import ATP-binding protein ThiQ from Salmonella paratyphi A (strain ATCC 9150 / SARB42).